Reading from the N-terminus, the 163-residue chain is MTSIAISSGSFDPITLGHLDIIKRGAKVFDEVYVVVLNNSSKKPFFSVEERLDLIREATKDIPNVKVDSHSGLLVEYAKMRNANAILRGLRAVSDFEYEMQITSMNRKLDENIETFFIMTNNQYSFLSSSIVKEVARYGGSVVDLVPPVVERALKEKFQTPLK.

Serine 10 lines the substrate pocket. ATP-binding positions include 10–11 (SF) and histidine 18. 3 residues coordinate substrate: lysine 42, leucine 74, and arginine 88. ATP contacts are provided by residues 89 to 91 (GLR), glutamate 99, and 124 to 130 (YSFLSSS).

This sequence belongs to the bacterial CoaD family. Homohexamer. Mg(2+) is required as a cofactor.

It is found in the cytoplasm. It catalyses the reaction (R)-4'-phosphopantetheine + ATP + H(+) = 3'-dephospho-CoA + diphosphate. It participates in cofactor biosynthesis; coenzyme A biosynthesis; CoA from (R)-pantothenate: step 4/5. Its function is as follows. Reversibly transfers an adenylyl group from ATP to 4'-phosphopantetheine, yielding dephospho-CoA (dPCoA) and pyrophosphate. The polypeptide is Phosphopantetheine adenylyltransferase (Bacillus anthracis (strain A0248)).